Here is a 421-residue protein sequence, read N- to C-terminus: Hydrolyase poxO (421 aa).

S239 serves as the catalytic Nucleophile.

Belongs to the AB hydrolase superfamily. FUS2 hydrolase family. As to quaternary structure, homodimer.

Its pathway is secondary metabolite biosynthesis. Its function is as follows. Hydrolyase; part of the gene cluster that mediates the biosynthesis of oxaleimides, cytotoxic compounds containing an unusual disubstituted succinimide moiety. The first step of the pathway is provided by the HR-PKS poxF that serves in a new mode of collaborative biosynthesis with the PKS-NRPS poxE, by providing the olefin containing amino acid substrate via the synthesis of an ACP-bound dec-4-enoate. The cytochrome P450 monooxygenase poxM-catalyzed oxidation at the alpha-position creates the enzyme-bound 2-hydroxydec-4-enoyl-ACP thioester, which may be prone to spontaneous hydrolysis to yield 2-hydroxydec-4-enoic acid due to increased electrophilicity of the carbonyl. 2-hydroxydec-4-enoic acid can then be further oxidized by poxM to yield the alpha-ketoacid 2-oxodec-4-enoicacid, which is reductively aminated by the aminotransferase poxL to yield (S,E)-2-aminodec-4-enoic acid. The Hybrid PKS-NRPS synthetase poxE then performs condensation between the octaketide product of its PKS modules and the amino group of (S,E)-2-aminodec-4-enoic acid which is activated and incorporated by the adenylation domain. The resulting aminoacyl product can be cyclized by the Diels-Alderase PoxQ and reductively released by the reductive (R) domain of poxE to yield an aldehyde intermediate. The released aldehyde is then substrate for a Knoevenagel condensation by the hydrolyase poxO followed by an oxidation at the 5-position of the pyrrolidone ring. The presence of the olefin from the amino acid building block allows for migration of the substituted allyl group to occur. This allylic transposition reaction takes place in a conjugate addition, semipinacol-like fashion to yield a succinimide intermediate. Iterative two-electron oxidations of the C7 methyl of the succinimide intermediate to the carboxylic acid can be catalyzed by one of two remaining cytochrome P450 monooxygenasess poxC or poxD to yield oxaleimide A. Subsequent oxidation yields the maleimide scaffold oxaleimide I. Both oxaleimide A and oxaleimide I can undergo oxidative modifications in the decalin ring to yield the series of products oxaleimides B to H. The chain is Hydrolyase poxO from Penicillium oxalicum.